The chain runs to 100 residues: Urease subunit gamma (100 aa).

The protein belongs to the urease gamma subunit family. As to quaternary structure, heterotrimer of UreA (gamma), UreB (beta) and UreC (alpha) subunits. Three heterotrimers associate to form the active enzyme.

The protein resides in the cytoplasm. It carries out the reaction urea + 2 H2O + H(+) = hydrogencarbonate + 2 NH4(+). It participates in nitrogen metabolism; urea degradation; CO(2) and NH(3) from urea (urease route): step 1/1. In Burkholderia ambifaria (strain MC40-6), this protein is Urease subunit gamma.